Consider the following 734-residue polypeptide: Photosystem I P700 chlorophyll a apoprotein A2 (734 aa).

The next 8 membrane-spanning stretches (helical) occupy residues 46–69 (IFASHFGQLAIIFLWTSGNLFHVA), 135–158 (LYTGALFLLFLSAISLIAGWLHLQ), 175–199 (LNHHLSGLFGVSSLAWTGHLVHVAI), 273–291 (IAHHHLAIAFIFLVAGHMY), 330–353 (LHFQLGLALASLGVITSLVAQHMY), 369–395 (AALYTHHQYIAGFIMTGAFAHGAIFFI), 417–439 (AIISHLSWASLFLGFHTLGLYVH), and 517–535 (FLVHHAIALGLHTTTLILV). Residues cysteine 559 and cysteine 568 each coordinate [4Fe-4S] cluster. A run of 2 helical transmembrane segments spans residues 575 to 596 (AFYLAVFWMLNTIGWVTFYWHW) and 643 to 665 (LSVWAWMFLFGHLVWATGFMFLI). Chlorophyll a is bound by residues histidine 654, methionine 662, and tyrosine 670. Residue tryptophan 671 participates in phylloquinone binding. Residues 707-727 (LVGLVHFSVGYIFTYAAFLIA) traverse the membrane as a helical segment.

Belongs to the PsaA/PsaB family. In terms of assembly, the PsaA/B heterodimer binds the P700 chlorophyll special pair and subsequent electron acceptors. PSI consists of a core antenna complex that captures photons, and an electron transfer chain that converts photonic excitation into a charge separation. The eukaryotic PSI reaction center is composed of at least 11 subunits. The cofactor is P700 is a chlorophyll a/chlorophyll a' dimer, A0 is one or more chlorophyll a, A1 is one or both phylloquinones and FX is a shared 4Fe-4S iron-sulfur center..

The protein resides in the plastid. It localises to the chloroplast thylakoid membrane. It carries out the reaction reduced [plastocyanin] + hnu + oxidized [2Fe-2S]-[ferredoxin] = oxidized [plastocyanin] + reduced [2Fe-2S]-[ferredoxin]. Functionally, psaA and PsaB bind P700, the primary electron donor of photosystem I (PSI), as well as the electron acceptors A0, A1 and FX. PSI is a plastocyanin-ferredoxin oxidoreductase, converting photonic excitation into a charge separation, which transfers an electron from the donor P700 chlorophyll pair to the spectroscopically characterized acceptors A0, A1, FX, FA and FB in turn. Oxidized P700 is reduced on the lumenal side of the thylakoid membrane by plastocyanin. In Nicotiana tomentosiformis (Tobacco), this protein is Photosystem I P700 chlorophyll a apoprotein A2.